A 218-amino-acid polypeptide reads, in one-letter code: Cytochrome b6 (218 aa).

Residues 35–55 (IFYCLGGITLVCFLIQFATGF) form a helical membrane-spanning segment. Heme c is bound at residue Cys-38. Heme b contacts are provided by His-89 and His-103. The next 3 helical transmembrane spans lie at 93–113 (ASMM…TGGF), 119–139 (LTWV…VTGY), and 189–209 (LHTF…FLMI). 2 residues coordinate heme b: His-190 and His-205.

This sequence belongs to the cytochrome b family. PetB subfamily. The 4 large subunits of the cytochrome b6-f complex are cytochrome b6, subunit IV (17 kDa polypeptide, PetD), cytochrome f and the Rieske protein, while the 4 small subunits are PetG, PetL, PetM and PetN. The complex functions as a dimer. Heme b serves as cofactor. Heme c is required as a cofactor.

Its subcellular location is the cellular thylakoid membrane. In terms of biological role, component of the cytochrome b6-f complex, which mediates electron transfer between photosystem II (PSII) and photosystem I (PSI), cyclic electron flow around PSI, and state transitions. This Prochlorococcus marinus (strain MIT 9215) protein is Cytochrome b6.